Here is a 525-residue protein sequence, read N- to C-terminus: Signal recognition particle protein (525 aa).

GTP contacts are provided by residues 107–114 (GLQGSGKT), 196–200 (DTAGR), and 254–257 (TKLD). The tract at residues 437-525 (GMGIPGIGRK…LSKLKFPGKK (89 aa)) is disordered. A compositionally biased stretch (basic residues) spans 447 to 467 (SATRKSKGAKGKSGKKSKKGT). The segment covering 480–497 (GVPGMPGLAGLPGGLPDL) has biased composition (low complexity).

It belongs to the GTP-binding SRP family. SRP54 subfamily. In terms of assembly, part of the signal recognition particle protein translocation system, which is composed of SRP and FtsY.

It localises to the cytoplasm. It carries out the reaction GTP + H2O = GDP + phosphate + H(+). Its function is as follows. Involved in targeting and insertion of nascent membrane proteins into the cytoplasmic membrane. Binds to the hydrophobic signal sequence of the ribosome-nascent chain (RNC) as it emerges from the ribosomes. The SRP-RNC complex is then targeted to the cytoplasmic membrane where it interacts with the SRP receptor FtsY. This is Signal recognition particle protein from Mycobacterium bovis (strain ATCC BAA-935 / AF2122/97).